The primary structure comprises 387 residues: Palmitoyltransferase ZDHHC16A (387 aa).

The next 2 helical transmembrane spans lie at 73–93 and 106–126; these read WFGMVFVFLVVALTSSVVFIA and SPGWMIWHICYGHWNLVMIVF. Residues 150–200 form the DHHC domain; the sequence is SVCKKCIIPKPARSHHCGICKTCILKMDHHCPWLNNCVGHFNHRYFFSFCL. Catalysis depends on cysteine 180, which acts as the S-palmitoyl cysteine intermediate. 3 helical membrane-spanning segments follow: residues 198-218, 236-256, and 281-301; these read FCLFLTLGCMYCSVSGRHLFI, GVPVTGIGLLIGIVPSAGVAG, and VIYMWVLTSTVSVALGALTLW.

This sequence belongs to the DHHC palmitoyltransferase family. As to expression, expressed in the central nervous system (CNS). Expressed in the developing forebrain, and especially in the telencephalon.

The protein resides in the endoplasmic reticulum membrane. It carries out the reaction L-cysteinyl-[protein] + hexadecanoyl-CoA = S-hexadecanoyl-L-cysteinyl-[protein] + CoA. Functionally, palmitoyl acyltransferase that mediates palmitoylation of proteins and is required during embryonic heart development. Involved in the proliferation of neural stem cells by regulating the FGF/ERK pathway. Involved in the proliferation of neural stem cells by regulating the FGF/ERK pathway. In Danio rerio (Zebrafish), this protein is Palmitoyltransferase ZDHHC16A.